A 525-amino-acid polypeptide reads, in one-letter code: MGNKWCGIFLTILLLAQMSQTIFGQNPNIPADDHHGAVPPELVMSAVVLKDGRIANYYINATVIETEFNNNPCPCVNQTELKAERLKVLKLWSAYTNYDQQYILDSYEQFATPDTLPDGTVNQFLHQFVVNGYATYSANSVAAEYALQANDANIHLFSELDPVSVEWQADNITVIYKIITNYTLPGLPGAPILDGFVNTHYVKFVPCKAEIWIDIMTQDSLVSTYLAAAQSNHPASDICDKIQQACTGPNQVYDSYESCLNYMSVVVNHTSFCPTGSLIANSSGCHYFHASSALNYPEIHCQHVRPYDSPTCQDFCLTQGCGNCDSNAECVFVSGSNSIVPKYQCKCKSGYVGNGTHCSPVTCSAQWQCPSEYNYGSCQNGLCGCNSGNGFKWVPDQATVNSHQACQCSENETVQWYNGVPECMPIGRCRYVWQCPQAATQYTSITCTKYGQNALVPFNTCLCNYGYDNLGFSYKCQCSVPKREIWSNVRQGTLCLAPNECTDNYHCASNNCQVQPGQWLGTCAA.

The first 24 residues, Met-1–Gly-24, serve as a signal peptide directing secretion. Asn-60, Asn-77, Asn-171, Asn-181, Asn-268, and Asn-281 each carry an N-linked (GlcNAc...) asparagine; by host glycan. Residues Leu-317–Ser-359 form the EGF-like domain. Disulfide bonds link Cys-321–Cys-330, Cys-324–Cys-345, and Cys-347–Cys-358. N-linked (GlcNAc...) asparagine; by host glycans are attached at residues Asn-354 and Asn-411.

The protein resides in the secreted. The chain is Putative EGF-like domain-containing protein R659 from Acanthamoeba polyphaga (Amoeba).